The sequence spans 363 residues: sn-glycerol-3-phosphate import ATP-binding protein UgpC (363 aa).

In terms of domain architecture, ABC transporter spans 4–235 (VVLRNVRKTY…PATTFVASFI (232 aa)). 37–44 (GPSGCGKS) contacts ATP.

This sequence belongs to the ABC transporter superfamily. sn-glycerol-3-phosphate importer (TC 3.A.1.1.3) family. The complex is composed of two ATP-binding proteins (UgpC), two transmembrane proteins (UgpA and UgpE) and a solute-binding protein (UgpB).

The protein resides in the cell inner membrane. The catalysed reaction is sn-glycerol 3-phosphate(out) + ATP + H2O = sn-glycerol 3-phosphate(in) + ADP + phosphate + H(+). In terms of biological role, part of the ABC transporter complex UgpBAEC involved in sn-glycerol-3-phosphate (G3P) import. Responsible for energy coupling to the transport system. The chain is sn-glycerol-3-phosphate import ATP-binding protein UgpC from Rhodopseudomonas palustris (strain ATCC BAA-98 / CGA009).